The chain runs to 189 residues: ATP synthase subunit b (189 aa).

The chain crosses the membrane as a helical span at residues 25 to 45 (LPVWPEVVIGLICFGIVFFVF).

Belongs to the ATPase B chain family. F-type ATPases have 2 components, F(1) - the catalytic core - and F(0) - the membrane proton channel. F(1) has five subunits: alpha(3), beta(3), gamma(1), delta(1), epsilon(1). F(0) has three main subunits: a(1), b(2) and c(10-14). The alpha and beta chains form an alternating ring which encloses part of the gamma chain. F(1) is attached to F(0) by a central stalk formed by the gamma and epsilon chains, while a peripheral stalk is formed by the delta and b chains.

Its subcellular location is the cell membrane. In terms of biological role, f(1)F(0) ATP synthase produces ATP from ADP in the presence of a proton or sodium gradient. F-type ATPases consist of two structural domains, F(1) containing the extramembraneous catalytic core and F(0) containing the membrane proton channel, linked together by a central stalk and a peripheral stalk. During catalysis, ATP synthesis in the catalytic domain of F(1) is coupled via a rotary mechanism of the central stalk subunits to proton translocation. Component of the F(0) channel, it forms part of the peripheral stalk, linking F(1) to F(0). The protein is ATP synthase subunit b of Streptomyces griseus subsp. griseus (strain JCM 4626 / CBS 651.72 / NBRC 13350 / KCC S-0626 / ISP 5235).